The following is a 211-amino-acid chain: Glycerol-3-phosphate acyltransferase 2 (211 aa).

5 helical membrane-spanning segments follow: residues 6–26 (FASLFILAYLLGSFPAGVVVG), 57–77 (IIVFLIDFFKGTLATLIPVIF), 82–102 (HYLCLIFGLVAILGHAFPIFL), 124–144 (FFLICAVIFIPILFITSMVSL), and 148–168 (ISVVLIFIASFFFHDIALSII).

Belongs to the PlsY family. Probably interacts with PlsX.

The protein resides in the cell membrane. The catalysed reaction is an acyl phosphate + sn-glycerol 3-phosphate = a 1-acyl-sn-glycero-3-phosphate + phosphate. Its pathway is lipid metabolism; phospholipid metabolism. Functionally, catalyzes the transfer of an acyl group from acyl-phosphate (acyl-PO(4)) to glycerol-3-phosphate (G3P) to form lysophosphatidic acid (LPA). This enzyme utilizes acyl-phosphate as fatty acyl donor, but not acyl-CoA or acyl-ACP. In Lactobacillus acidophilus (strain ATCC 700396 / NCK56 / N2 / NCFM), this protein is Glycerol-3-phosphate acyltransferase 2.